Consider the following 116-residue polypeptide: Large ribosomal subunit protein bL20c (116 aa).

This sequence belongs to the bacterial ribosomal protein bL20 family.

It localises to the plastid. The protein resides in the chloroplast. Functionally, binds directly to 23S ribosomal RNA and is necessary for the in vitro assembly process of the 50S ribosomal subunit. It is not involved in the protein synthesizing functions of that subunit. The polypeptide is Large ribosomal subunit protein bL20c (Cryptomeria japonica (Japanese cedar)).